The chain runs to 411 residues: Small ribosomal subunit protein bS1c (411 aa).

The N-terminal 41 residues, 1 to 41 (MASLAQQLAGGLRCPPLSNSNLSKPFSPKHTLKPRFSPIVS), are a transit peptide targeting the chloroplast. 3 S1 motif domains span residues 96-166 (GSRV…LSLR), 184-248 (DVVV…MSNR), and 261-329 (GSVV…LSTK).

The protein belongs to the bacterial ribosomal protein bS1 family. Component of the chloroplast small ribosomal subunit (SSU). Mature 70S chloroplast ribosomes of higher plants consist of a small (30S) and a large (50S) subunit. The 30S small subunit contains 1 molecule of ribosomal RNA (16S rRNA) and 24 different proteins. The 50S large subunit contains 3 rRNA molecules (23S, 5S and 4.5S rRNA) and 33 different proteins.

It localises to the plastid. Its subcellular location is the chloroplast. In terms of biological role, component of the chloroplast ribosome (chloro-ribosome), a dedicated translation machinery responsible for the synthesis of chloroplast genome-encoded proteins, including proteins of the transcription and translation machinery and components of the photosynthetic apparatus. Actively engaged in the initiation complex formation via a strong mRNA-binding activity. Possesses a poly(A)-binding activity which might play a role as a control element in chloroplast mRNA translation. The protein is Small ribosomal subunit protein bS1c (RPS1) of Spinacia oleracea (Spinach).